The primary structure comprises 1252 residues: Protein ITPRID2 (1252 aa).

Positions 28 to 70 (CRSSWQASETEDLSTETTTQDEDEDDEEDLPGTKLPAPAGRGN) are disordered. The segment covering 36-57 (ETEDLSTETTTQDEDEDDEEDL) has biased composition (acidic residues). Thr85 is subject to Phosphothreonine. 5 positions are modified to phosphoserine: Ser90, Ser109, Ser207, Ser268, and Ser328. 3 disordered regions span residues 306-483 (DKTE…HVPA), 552-575 (HVTP…APLQ), and 595-636 (FPQC…GELP). The segment covering 357 to 372 (TVTEEVSGSSSTVTDS) has biased composition (low complexity). Basic and acidic residues-rich tracts occupy residues 395–407 (SREA…DPLR) and 415–428 (DLGH…HCEL). The span at 429 to 441 (ESSSELKSAQASS) shows a compositional bias: low complexity. Position 465 is a phosphoserine (Ser465). Phosphoserine is present on residues Ser643, Ser667, Ser736, Ser738, Ser745, Ser758, and Ser766. A Glycyl lysine isopeptide (Lys-Gly) (interchain with G-Cter in SUMO2) cross-link involves residue Lys807. Phosphoserine occurs at positions 866 and 898. The stretch at 955-1031 (QELQVVRRSL…LLGLDEQLRA (77 aa)) forms a coiled coil. A phosphoserine mark is found at Ser1036, Ser1051, Ser1056, Ser1059, and Ser1114. Disordered stretches follow at residues 1095 to 1131 (GESS…GSKP) and 1147 to 1180 (ALTP…ASPV). Residues 1103 to 1117 (SQATSESSSVCSSPS) are compositionally biased toward low complexity. Thr1149 bears the Phosphothreonine mark. The segment covering 1151 to 1161 (TAPSRTGSVQT) has biased composition (polar residues). Ser1154 is subject to Phosphoserine. The residue at position 1161 (Thr1161) is a Phosphothreonine.

It is found in the cytoplasm. This chain is Protein ITPRID2 (Itprid2), found in Mus musculus (Mouse).